Reading from the N-terminus, the 369-residue chain is Peptide chain release factor 2 (369 aa).

Q251 carries the N5-methylglutamine modification.

Belongs to the prokaryotic/mitochondrial release factor family. In terms of processing, methylated by PrmC. Methylation increases the termination efficiency of RF2.

The protein resides in the cytoplasm. In terms of biological role, peptide chain release factor 2 directs the termination of translation in response to the peptide chain termination codons UGA and UAA. The sequence is that of Peptide chain release factor 2 (prfB) from Thermotoga maritima (strain ATCC 43589 / DSM 3109 / JCM 10099 / NBRC 100826 / MSB8).